The following is a 244-amino-acid chain: 6-carboxyhexanoate--CoA ligase (244 aa).

Belongs to the BioW family. In terms of assembly, homodimer. The cofactor is Mg(2+).

The enzyme catalyses heptanedioate + ATP + CoA = 6-carboxyhexanoyl-CoA + AMP + diphosphate. It participates in metabolic intermediate metabolism; pimeloyl-CoA biosynthesis; pimeloyl-CoA from pimelate: step 1/1. In terms of biological role, catalyzes the transformation of pimelate into pimeloyl-CoA with concomitant hydrolysis of ATP to AMP. The protein is 6-carboxyhexanoate--CoA ligase of Methanococcus maripaludis (strain DSM 14266 / JCM 13030 / NBRC 101832 / S2 / LL).